The chain runs to 105 residues: uncharacterized protein (105 aa).

Residues 14–104 (HYITACLKII…VEWLMKSNVN (91 aa)) enclose the ABM domain.

This is an uncharacterized protein from Bacillus subtilis (strain 168).